A 195-amino-acid polypeptide reads, in one-letter code: Imidazoleglycerol-phosphate dehydratase (195 aa).

This sequence belongs to the imidazoleglycerol-phosphate dehydratase family.

The protein localises to the cytoplasm. It catalyses the reaction D-erythro-1-(imidazol-4-yl)glycerol 3-phosphate = 3-(imidazol-4-yl)-2-oxopropyl phosphate + H2O. The protein operates within amino-acid biosynthesis; L-histidine biosynthesis; L-histidine from 5-phospho-alpha-D-ribose 1-diphosphate: step 6/9. This chain is Imidazoleglycerol-phosphate dehydratase, found in Clostridium botulinum (strain Alaska E43 / Type E3).